The following is a 250-amino-acid chain: Leucyl/phenylalanyl-tRNA--protein transferase (250 aa).

It belongs to the L/F-transferase family.

The protein resides in the cytoplasm. The enzyme catalyses N-terminal L-lysyl-[protein] + L-leucyl-tRNA(Leu) = N-terminal L-leucyl-L-lysyl-[protein] + tRNA(Leu) + H(+). It catalyses the reaction N-terminal L-arginyl-[protein] + L-leucyl-tRNA(Leu) = N-terminal L-leucyl-L-arginyl-[protein] + tRNA(Leu) + H(+). It carries out the reaction L-phenylalanyl-tRNA(Phe) + an N-terminal L-alpha-aminoacyl-[protein] = an N-terminal L-phenylalanyl-L-alpha-aminoacyl-[protein] + tRNA(Phe). Functionally, functions in the N-end rule pathway of protein degradation where it conjugates Leu, Phe and, less efficiently, Met from aminoacyl-tRNAs to the N-termini of proteins containing an N-terminal arginine or lysine. This chain is Leucyl/phenylalanyl-tRNA--protein transferase, found in Cupriavidus taiwanensis (strain DSM 17343 / BCRC 17206 / CCUG 44338 / CIP 107171 / LMG 19424 / R1) (Ralstonia taiwanensis (strain LMG 19424)).